Consider the following 563-residue polypeptide: Cystathionine gamma-synthase 1, chloroplastic (563 aa).

The N-terminal 68 residues, 1-68 (MAVSSFQCPT…SRILRFPPNF (68 aa)), are a transit peptide targeting the chloroplast. The pyridoxal 5'-phosphate site is built by tyrosine 226, arginine 228, glycine 256, methionine 257, tyrosine 281, serine 376, and threonine 378. N6-(pyridoxal phosphate)lysine is present on lysine 379.

This sequence belongs to the trans-sulfuration enzymes family. Pyridoxal 5'-phosphate serves as cofactor.

It localises to the plastid. The protein localises to the chloroplast. The catalysed reaction is O-phospho-L-homoserine + L-cysteine = L,L-cystathionine + phosphate. It catalyses the reaction O-succinyl-L-homoserine + L-cysteine = L,L-cystathionine + succinate + H(+). It participates in amino-acid biosynthesis; L-methionine biosynthesis via de novo pathway; L-cystathionine from O-succinyl-L-homoserine: step 1/1. Inhibited by propargylglycine. Catalyzes the first committed step of methionine (Met) biosynthesis. Catalyzes the formation of L-cystathionine from homoserine esters and L-cysteine, via a gamma-replacement reaction. Substrate preference for cystathionine synthesis is O-phospho-L-homoserine (OPH) &gt; O(4)-succinyl-L-homoserine (OSH) &gt;&gt; O-acetyl-L-homoserine (OAH). Is able, at extremely low rate, to catalyze a gamma-elimination of OPH in the absence of cysteine to produce inorganic phosphate (Pi), 2-oxobutanoate and ammonia. The protein is Cystathionine gamma-synthase 1, chloroplastic of Arabidopsis thaliana (Mouse-ear cress).